The chain runs to 422 residues: UDP-N-acetylglucosamine 1-carboxyvinyltransferase (422 aa).

22-23 (KN) is a binding site for phosphoenolpyruvate. UDP-N-acetyl-alpha-D-glucosamine is bound at residue R92. C116 (proton donor) is an active-site residue. C116 is modified (2-(S-cysteinyl)pyruvic acid O-phosphothioketal). UDP-N-acetyl-alpha-D-glucosamine is bound by residues 121-125 (RPVDQ), D305, and I327.

The protein belongs to the EPSP synthase family. MurA subfamily.

The protein resides in the cytoplasm. It carries out the reaction phosphoenolpyruvate + UDP-N-acetyl-alpha-D-glucosamine = UDP-N-acetyl-3-O-(1-carboxyvinyl)-alpha-D-glucosamine + phosphate. It participates in cell wall biogenesis; peptidoglycan biosynthesis. Functionally, cell wall formation. Adds enolpyruvyl to UDP-N-acetylglucosamine. The chain is UDP-N-acetylglucosamine 1-carboxyvinyltransferase from Sorangium cellulosum (strain So ce56) (Polyangium cellulosum (strain So ce56)).